Here is a 130-residue protein sequence, read N- to C-terminus: Ribonuclease P protein component (130 aa).

It belongs to the RnpA family. As to quaternary structure, consists of a catalytic RNA component (M1 or rnpB) and a protein subunit.

The catalysed reaction is Endonucleolytic cleavage of RNA, removing 5'-extranucleotides from tRNA precursor.. RNaseP catalyzes the removal of the 5'-leader sequence from pre-tRNA to produce the mature 5'-terminus. It can also cleave other RNA substrates such as 4.5S RNA. The protein component plays an auxiliary but essential role in vivo by binding to the 5'-leader sequence and broadening the substrate specificity of the ribozyme. The sequence is that of Ribonuclease P protein component from Desulfovibrio desulfuricans (strain ATCC 27774 / DSM 6949 / MB).